A 275-amino-acid polypeptide reads, in one-letter code: Intercellular adhesion molecule 2 (275 aa).

The N-terminal stretch at 1–24 (MSSFGYRTLTVALFALICCPGSDE) is a signal peptide. Residues 25–223 (KVFEVHVRPK…EIYEPVSDSQ (199 aa)) lie on the Extracellular side of the membrane. Residues 41–98 (KASLEVNCSTTCNQPEVGGLETSLDKILLDEQAQWKHYLVSNISHDTVLQCHFTCSGK) form the Ig-like C2-type 1 domain. 7 N-linked (GlcNAc...) asparagine glycosylation sites follow: Asn47, Asn82, Asn105, Asn153, Asn158, Asn176, and Asn187. Cystine bridges form between Cys48–Cys91 and Cys52–Cys95. The 71-residue stretch at 127–197 (GKSFTIECRV…FSCLAVLDLI (71 aa)) folds into the Ig-like C2-type 2 domain. Cys134 and Cys190 form a disulfide bridge. Residues 224 to 248 (MVIIVTVVSVLLSLFVTSVLLCFIF) form a helical membrane-spanning segment. Over 249–275 (GQHLRQQRMGTYGVRAAWRRLPQAFRP) the chain is Cytoplasmic. A required for interaction with EZR, MSN and RDX and co-localization to microvilli region spans residues 251 to 275 (HLRQQRMGTYGVRAAWRRLPQAFRP).

It belongs to the immunoglobulin superfamily. ICAM family. In terms of assembly, interacts with RDX, EZR and MSN.

The protein resides in the membrane. Its subcellular location is the cell projection. It localises to the microvillus. Its function is as follows. ICAM proteins are ligands for the leukocyte adhesion protein LFA-1 (integrin alpha-L/beta-2). ICAM2 may play a role in lymphocyte recirculation by blocking LFA-1-dependent cell adhesion. It mediates adhesive interactions important for antigen-specific immune response, NK-cell mediated clearance, lymphocyte recirculation, and other cellular interactions important for immune response and surveillance. This chain is Intercellular adhesion molecule 2 (ICAM2), found in Gorilla gorilla gorilla (Western lowland gorilla).